A 336-amino-acid polypeptide reads, in one-letter code: Ephrin-B2 (336 aa).

Positions 1–28 (MAMARSRRDSVWKYCWGLLMVLCRTAIS) are cleaved as a signal peptide. At 29 to 232 (RSIVLEPIYW…LLGSEVALFA (204 aa)) the chain is on the extracellular side. One can recognise an Ephrin RBD domain in the interval 31–167 (IVLEPIYWNS…TRAMKILMKV (137 aa)). Asn39 carries N-linked (GlcNAc...) asparagine glycosylation. 2 cysteine pairs are disulfide-bonded: Cys65–Cys104 and Cys92–Cys156. An N-linked (GlcNAc...) asparagine glycan is attached at Asn142. The interval 170 to 216 (DASSAGSARNHGPTRRPELEAGTNGRSSTTSPFVKPNPGSSTDGNSA) is disordered. Polar residues predominate over residues 193-216 (NGRSSTTSPFVKPNPGSSTDGNSA). A helical membrane pass occupies residues 233–253 (GIASGCIIFIVIIITLVVLLL). The Cytoplasmic portion of the chain corresponds to 254–336 (KYRRRHRKHS…QSPANIYYKV (83 aa)). Ser263 is modified (phosphoserine). Residue Thr277 is modified to Phosphothreonine. Arg280 carries the post-translational modification Omega-N-methylarginine. The short motif at 334–336 (YKV) is the PDZ-binding element.

It belongs to the ephrin family. In terms of assembly, interacts with PDZRN3. Binds to the ephrin receptor EPHA3, EPHA4 and EPHB4. In terms of processing, inducible phosphorylation of tyrosine residues in the cytoplasmic domain. As to expression, expressed in inner and outer pillar cells of the organ of Corti (at protein level). Expressed on lateral floor plate cells, specifically on commissural axon segments that have passed through the floor plate. Expressed in cells of the retinal ganglion cell layer during retinal axon guidance to the optic disk. Expressed in myogenic progenitor cells.

Its subcellular location is the cell membrane. It is found in the cell junction. The protein resides in the adherens junction. In terms of biological role, cell surface transmembrane ligand for Eph receptors, a family of receptor tyrosine kinases which are crucial for migration, repulsion and adhesion during neuronal, vascular and epithelial development. Binds promiscuously Eph receptors residing on adjacent cells, leading to contact-dependent bidirectional signaling into neighboring cells. The signaling pathway downstream of the receptor is referred to as forward signaling while the signaling pathway downstream of the ephrin ligand is referred to as reverse signaling. Binds to receptor tyrosine kinase including EPHA4, EPHA3 and EPHB4. Together with EPHB4 plays a central role in heart morphogenesis and angiogenesis through regulation of cell adhesion and cell migration. EPHB4-mediated forward signaling controls cellular repulsion and segregation from EFNB2-expressing cells. May play a role in constraining the orientation of longitudinally projecting axons. The chain is Ephrin-B2 (Efnb2) from Mus musculus (Mouse).